A 990-amino-acid chain; its full sequence is Importin beta-like protein kap111 (990 aa).

Belongs to the importin beta family.

It localises to the nucleus. Functionally, functions as a component of the nuclear pore complex (NPC). NPC components, collectively referred to as nucleoporins (NUPs), can play the role of both NPC structural components and of docking or interaction partners for transiently associated nuclear transport factors. Active directional transport is assured by both, a Phe-Gly (FG) repeat affinity gradient for these transport factors across the NPC and a transport cofactor concentration gradient across the nuclear envelope. The protein is Importin beta-like protein kap111 (kap111) of Schizosaccharomyces pombe (strain 972 / ATCC 24843) (Fission yeast).